A 212-amino-acid polypeptide reads, in one-letter code: ATP-dependent Clp protease proteolytic subunit (212 aa).

Catalysis depends on serine 114, which acts as the Nucleophile. Histidine 139 is a catalytic residue.

The protein belongs to the peptidase S14 family. As to quaternary structure, fourteen ClpP subunits assemble into 2 heptameric rings which stack back to back to give a disk-like structure with a central cavity, resembling the structure of eukaryotic proteasomes.

Its subcellular location is the cytoplasm. It catalyses the reaction Hydrolysis of proteins to small peptides in the presence of ATP and magnesium. alpha-casein is the usual test substrate. In the absence of ATP, only oligopeptides shorter than five residues are hydrolyzed (such as succinyl-Leu-Tyr-|-NHMec, and Leu-Tyr-Leu-|-Tyr-Trp, in which cleavage of the -Tyr-|-Leu- and -Tyr-|-Trp bonds also occurs).. Cleaves peptides in various proteins in a process that requires ATP hydrolysis. Has a chymotrypsin-like activity. Plays a major role in the degradation of misfolded proteins. This chain is ATP-dependent Clp protease proteolytic subunit, found in Azoarcus sp. (strain BH72).